A 123-amino-acid chain; its full sequence is Ribosome-binding factor A (123 aa).

Belongs to the RbfA family. As to quaternary structure, monomer. Binds 30S ribosomal subunits, but not 50S ribosomal subunits or 70S ribosomes.

Its subcellular location is the cytoplasm. Functionally, one of several proteins that assist in the late maturation steps of the functional core of the 30S ribosomal subunit. Associates with free 30S ribosomal subunits (but not with 30S subunits that are part of 70S ribosomes or polysomes). Required for efficient processing of 16S rRNA. May interact with the 5'-terminal helix region of 16S rRNA. This is Ribosome-binding factor A from Ralstonia pickettii (strain 12J).